Consider the following 649-residue polypeptide: MSSFGTGKTKEVIFSMEEGSVKMFLRGRPVPMLIPDELAPTYSLDTRSELPSSRLKLDWVYGYRGRDCRANLYLLPTGEVVYFVASVAVLYSVEEQRQRHYLGHNDDIKCLAVHPDMVTIATGQVAGTTKEGKPLPPHVRVWDSVSLSTLHVLGLGVFDRAVCCVAFSKSNGGNLLCAVDESNDHVLSVWDWAKESKVVDSKCSNEAVLVATFHPTDPNLLITCGKSHIYFWSLEGGNLSKRQGLFEKHEKPKYVLCVTFLEGGDVVTGDSGGNLYVWGKGGNRITQEVLGAHDGGVFALCALRDGTLVSGGGRDRRVVLWGSDYSKVQEVEVPEDFGPVRTVAEGRGDTLYVGTTRNSILLGSVHTGFSLLVQGHVEELWGLATHPSRAQFVSCGQDKLVHLWSSETHQPVWSRSIEDPARSAGFHPSGSVLAVGTVTGRWLLLDTDTRDLVAIHTDGNEQISVVSFSPDGAYLAVGSHDNLVYVYTVDQGGRKVSRLGKCSGHSSFITHLDWAQDSTCFVTNSGDYEILYWDAATCKQITSADTVRNVQWATATCVLGFGVFGIWPEGADGTDINAVARSHDGNLLVSADDFGKVHLFSYPCCQPRALSHKYGGHSSHVTNVAFLWDDSMVLTTGGKDTSVLQWRVA.

The interval 10–649 (KEVIFSMEEG…DTSVLQWRVA (640 aa)) is tandem atypical propeller in EMLs. 12 WD repeats span residues 56–93 (KLDW…LYSV), 97–144 (RQRH…VWDS), 151–192 (HVLG…VWDW), 195–234 (ESKV…FWSL), 241–280 (KRQG…VWGK), 285–323 (ITQE…LWGS), 369–406 (FSLL…LWSS), 410–447 (QPVW…LLDT), 452–489 (LVAI…VYTV), 495–535 (KVSR…YWDA), 564–602 (FGIW…LFSY), and 609–648 (ALSH…QWRV).

This sequence belongs to the WD repeat EMAP family. In terms of assembly, interacts with GRID2 and may also interact with GRID1. Interacts with EML3. Binds unpolymerized tubulins via its WD repeat region. Widely expressed in both brain and peripheral tissues, including brainstem and enrichment in the postsynaptic density, PSD.

It is found in the cytoplasm. The protein localises to the cytoskeleton. It localises to the spindle. Functionally, tubulin binding protein that inhibits microtubule nucleation and growth, resulting in shorter microtubules. In Rattus norvegicus (Rat), this protein is Echinoderm microtubule-associated protein-like 2 (Eml2).